The sequence spans 257 residues: Imidazole glycerol phosphate synthase subunit HisF (257 aa).

Catalysis depends on residues aspartate 11 and aspartate 130.

It belongs to the HisA/HisF family. In terms of assembly, heterodimer of HisH and HisF.

Its subcellular location is the cytoplasm. The catalysed reaction is 5-[(5-phospho-1-deoxy-D-ribulos-1-ylimino)methylamino]-1-(5-phospho-beta-D-ribosyl)imidazole-4-carboxamide + L-glutamine = D-erythro-1-(imidazol-4-yl)glycerol 3-phosphate + 5-amino-1-(5-phospho-beta-D-ribosyl)imidazole-4-carboxamide + L-glutamate + H(+). It participates in amino-acid biosynthesis; L-histidine biosynthesis; L-histidine from 5-phospho-alpha-D-ribose 1-diphosphate: step 5/9. In terms of biological role, IGPS catalyzes the conversion of PRFAR and glutamine to IGP, AICAR and glutamate. The HisF subunit catalyzes the cyclization activity that produces IGP and AICAR from PRFAR using the ammonia provided by the HisH subunit. In Shewanella frigidimarina (strain NCIMB 400), this protein is Imidazole glycerol phosphate synthase subunit HisF.